Consider the following 390-residue polypeptide: Monomeric sarcosine oxidase (390 aa).

FAD is bound at residue 6–36 (DVIVVGAGSMGMAAGYQLAKQGVKTLLVDAF). The residue at position 316 (C316) is an S-8alpha-FAD cysteine.

As to quaternary structure, monomer. It depends on FAD as a cofactor.

It is found in the cytoplasm. It catalyses the reaction sarcosine + O2 + H2O = formaldehyde + glycine + H2O2. Pyrrole-2-carboxylate is a competitive inhibitor. N-(cyclopropyl)glycine (CPG) is a mechanism-based inhibitor and inactivates the enzyme by covalently modifying the flavin. Its function is as follows. Catalyzes the oxidative demethylation of sarcosine. Can also oxidize other secondary amino acids such as N-methyl-L-alanine. The sequence is that of Monomeric sarcosine oxidase (soxA) from Bacillus sp. (strain B-0618).